The sequence spans 292 residues: UPF0696 protein C11orf68 homolog (292 aa).

Residues 1–10 (MAAAAAAVAG) show a composition bias toward low complexity. A disordered region spans residues 1–60 (MAAAAAAVAGAGRGGGGGAEPRQERSRARGWAGAERSEGRRMEPGEELEEEDSPGGREDG). Basic and acidic residues predominate over residues 35–44 (ERSEGRRMEP).

Belongs to the UPF0696 family.

In Bos taurus (Bovine), this protein is UPF0696 protein C11orf68 homolog.